The sequence spans 418 residues: Glucose-1-phosphate adenylyltransferase (418 aa).

Alpha-D-glucose 1-phosphate is bound by residues Tyr107, Gly172, 187 to 188, and Ser205; that span reads EK.

It belongs to the bacterial/plant glucose-1-phosphate adenylyltransferase family. In terms of assembly, homotetramer.

It carries out the reaction alpha-D-glucose 1-phosphate + ATP + H(+) = ADP-alpha-D-glucose + diphosphate. Its pathway is glycan biosynthesis; glycogen biosynthesis. In terms of biological role, involved in the biosynthesis of ADP-glucose, a building block required for the elongation reactions to produce glycogen. Catalyzes the reaction between ATP and alpha-D-glucose 1-phosphate (G1P) to produce pyrophosphate and ADP-Glc. The protein is Glucose-1-phosphate adenylyltransferase of Gemmatimonas aurantiaca (strain DSM 14586 / JCM 11422 / NBRC 100505 / T-27).